A 1607-amino-acid chain; its full sequence is Abnormal cell migration protein 38 (1607 aa).

Disordered stretches follow at residues 14–52 (EFNK…SQDF), 67–93 (RLSP…QYHV), 167–222 (STSY…AAQA), 326–425 (GSSA…PPSQ), 459–478 (SPNT…GMDQ), 549–594 (MVHR…QHSY), 845–931 (YDEN…PETE), 1017–1061 (SVQV…DYDM), 1141–1241 (EPSP…VTPK), 1319–1378 (ETPN…KGQL), 1392–1445 (FANV…PQAV), and 1517–1607 (KVKT…STDP). Composition is skewed to polar residues over residues 81 to 93 (PGPS…QYHV) and 179 to 191 (PSGN…NHQQ). Over residues 195 to 205 (VPQVQQQPAKP) the composition is skewed to low complexity. A compositionally biased stretch (basic residues) spans 206–218 (KTTKKRPPPKKKT). Over residues 327-341 (SSASSSAQPSQPAKK) the composition is skewed to low complexity. Polar residues-rich tracts occupy residues 349 to 371 (VPNT…QITP) and 379 to 425 (PTTT…PPSQ). Low complexity predominate over residues 585-594 (NSHSQSQHSY). Positions 858-871 (EEPESESESEPEAE) are enriched in acidic residues. Basic and acidic residues-rich tracts occupy residues 872–886 (PEPK…EPAR) and 907–917 (YRNESESTFDW). Low complexity-rich tracts occupy residues 1333–1354 (PNIP…SVSV), 1395–1419 (VPSS…VSAK), and 1584–1601 (LLGT…SSGL).

Expressed in gonad distal tip cells and gonad sheath cells.

It localises to the nucleus. Its subcellular location is the cytoplasm. Its function is as follows. During gonad development, involved in distal tip cell (DTC) migration from the dorsal side of the hermaphrodite body to the midbody which allows for the formation of gonad arms. Role in gonad DTC migration may be in association with integrin related proteins ina-1 and mig-15. This Caenorhabditis elegans protein is Abnormal cell migration protein 38.